The primary structure comprises 193 residues: Ribosomal RNA small subunit methyltransferase G (193 aa).

Residues glycine 64, leucine 69, isoleucine 113 to glutamate 114, and arginine 126 each bind S-adenosyl-L-methionine.

It belongs to the methyltransferase superfamily. RNA methyltransferase RsmG family.

The protein resides in the cytoplasm. The catalysed reaction is guanosine(527) in 16S rRNA + S-adenosyl-L-methionine = N(7)-methylguanosine(527) in 16S rRNA + S-adenosyl-L-homocysteine. Functionally, specifically methylates the N7 position of guanine in position 527 of 16S rRNA. The protein is Ribosomal RNA small subunit methyltransferase G of Rickettsia massiliae (strain Mtu5).